Consider the following 332-residue polypeptide: uncharacterized protein (332 aa).

The interval 306–332 (EKNTSEVTEPKTGPSGTKDNYHLHSIF) is disordered.

This is an uncharacterized protein from Homo sapiens (Human).